The chain runs to 528 residues: Ankyrin repeat and death domain-containing protein 1B (528 aa).

ANK repeat units lie at residues 67-96 (PNER…NINV), 100-129 (MNRT…RVDV), 133-162 (HGLT…DQRA), 166-197 (DGMS…DLNQ), 201-230 (KGRK…HTSE), 234-263 (GGNT…DINE), 267-296 (LNIS…DLHQ), 300-329 (PKES…DIDI), 333-362 (KQQT…DLKA), and 366-395 (QGKT…YYAW). A Death domain is found at 427 to 515 (TLLWDLAYHQ…KLAEKTRHFK (89 aa)).

The chain is Ankyrin repeat and death domain-containing protein 1B (ANKDD1B) from Homo sapiens (Human).